A 37-amino-acid polypeptide reads, in one-letter code: Large ribosomal subunit protein bL36c (37 aa).

This sequence belongs to the bacterial ribosomal protein bL36 family.

The protein localises to the plastid. It localises to the chloroplast. The protein is Large ribosomal subunit protein bL36c of Cucumis sativus (Cucumber).